A 401-amino-acid polypeptide reads, in one-letter code: tRNA(Met) cytidine acetate ligase (401 aa).

ATP-binding positions include 7-20, Gly-102, Asn-164, and Arg-189; that span reads IVEYNPFHNGHLYH.

It belongs to the TmcAL family.

It is found in the cytoplasm. The catalysed reaction is cytidine(34) in elongator tRNA(Met) + acetate + ATP = N(4)-acetylcytidine(34) in elongator tRNA(Met) + AMP + diphosphate. Its function is as follows. Catalyzes the formation of N(4)-acetylcytidine (ac(4)C) at the wobble position of elongator tRNA(Met), using acetate and ATP as substrates. First activates an acetate ion to form acetyladenylate (Ac-AMP) and then transfers the acetyl group to tRNA to form ac(4)C34. This Thermoanaerobacter pseudethanolicus (strain ATCC 33223 / 39E) (Clostridium thermohydrosulfuricum) protein is tRNA(Met) cytidine acetate ligase.